The following is a 904-amino-acid chain: Alanine--tRNA ligase (904 aa).

Residues His-594, His-598, Cys-695, and His-699 each contribute to the Zn(2+) site.

This sequence belongs to the class-II aminoacyl-tRNA synthetase family. Zn(2+) is required as a cofactor.

It localises to the cytoplasm. The catalysed reaction is tRNA(Ala) + L-alanine + ATP = L-alanyl-tRNA(Ala) + AMP + diphosphate. Functionally, catalyzes the attachment of alanine to tRNA(Ala) in a two-step reaction: alanine is first activated by ATP to form Ala-AMP and then transferred to the acceptor end of tRNA(Ala). Also edits incorrectly charged Ser-tRNA(Ala) and Gly-tRNA(Ala) via its editing domain. The polypeptide is Alanine--tRNA ligase (Anaeromyxobacter sp. (strain Fw109-5)).